We begin with the raw amino-acid sequence, 389 residues long: MIIRSLLDTDLYKFTMMQVVLHHFPGAHVEYRFKCRNPGVDLVPYIEAIRAEIRHLCSLRFTEAELDYLRGLRFIKSDFVDFLDLFHLSEKYIDIRPAASNDGQIDIVISGPWLHTIMFEVPVLAIVNEVYFSRTQAHPQWDEGKRRLTEKLASLTRPGLEDCRIADYGTRRRFSHTWHEHVLMEARSQLGSQYAGTSNVYFAMKHNMTPLGTMAHEYLQACQSLGPRLRDSQVFALETWAREYRGDLGIALSDTYGFDAFLRDFDMFFCKLFDGVRHDSGDPFEWGERMLKHYEGMRVDPQSKALIFSDSLDMPKVVRLYERFRSRCKLAFGVGTNLTNDLGYTPLQIVIKMVRCNGQPVAKLSDAPEKTMCDDPAYLAYLKQVFGVQ.

Residue His216 is modified to Phosphohistidine; by autocatalysis.

This sequence belongs to the NAPRTase family. Transiently phosphorylated on a His residue during the reaction cycle. Phosphorylation strongly increases the affinity for substrates and increases the rate of nicotinate D-ribonucleotide production. Dephosphorylation regenerates the low-affinity form of the enzyme, leading to product release.

The enzyme catalyses nicotinate + 5-phospho-alpha-D-ribose 1-diphosphate + ATP + H2O = nicotinate beta-D-ribonucleotide + ADP + phosphate + diphosphate. It functions in the pathway cofactor biosynthesis; NAD(+) biosynthesis; nicotinate D-ribonucleotide from nicotinate: step 1/1. In terms of biological role, catalyzes the synthesis of beta-nicotinate D-ribonucleotide from nicotinate and 5-phospho-D-ribose 1-phosphate at the expense of ATP. The polypeptide is Nicotinate phosphoribosyltransferase (Ralstonia nicotianae (strain ATCC BAA-1114 / GMI1000) (Ralstonia solanacearum)).